Reading from the N-terminus, the 373-residue chain is Cytoplasmic tRNA 2-thiolation protein 1 (373 aa).

Belongs to the TtcA family. CTU1/NCS6/ATPBD3 subfamily.

Its subcellular location is the cytoplasm. The protein operates within tRNA modification; 5-methoxycarbonylmethyl-2-thiouridine-tRNA biosynthesis. Plays a central role in 2-thiolation of mcm(5)S(2)U at tRNA wobble positions of tRNA(Lys), tRNA(Glu) and tRNA(Gln). Directly binds tRNAs and probably acts by catalyzing adenylation of tRNAs, an intermediate required for 2-thiolation. It is unclear whether it acts as a sulfurtransferase that transfers sulfur from thiocarboxylated URM1 onto the uridine of tRNAs at wobble position. Prior mcm(5) tRNA modification by the elongator complex is required for 2-thiolation. May also be involved in protein urmylation. This chain is Cytoplasmic tRNA 2-thiolation protein 1, found in Malassezia globosa (strain ATCC MYA-4612 / CBS 7966) (Dandruff-associated fungus).